Here is a 94-residue protein sequence, read N- to C-terminus: Phormicin (94 aa).

The N-terminal stretch at 1-23 (MKFFMVFVVTFCLAVCFVSQSLA) is a signal peptide. A propeptide spanning residues 24–54 (IPADAANDAHFVDGVQALKEIEPELHGRYKR) is cleaved from the precursor. 3 disulfide bridges follow: Cys-57-Cys-84, Cys-70-Cys-90, and Cys-74-Cys-92.

The protein belongs to the invertebrate defensin family. Type 1 subfamily.

It localises to the secreted. In terms of biological role, responsible for the anti Gram-positive activity of immune hemolymph of P.terraenovae. This chain is Phormicin, found in Protophormia terraenovae (Northern blowfly).